We begin with the raw amino-acid sequence, 256 residues long: MEVIPAIDLLGGQCVRLYQGDYQQAQVFNNDPVQVARTWAEQGATRLHVVDLDGAKQGESVNLGAIAKIAAAIDIPVQVGGGLRTVESVAQLFDVGVERAILGTAAVDNPDLVTELCAKYPGRIAVGIDARDGKVATKGWLETSAVLATDLAKQMATQGVAAIIYTDIHRDGTMAGPNLEALRELAATIEIPVIASGGVSSLADLVNLVALEGIGVTGAIVGRAIYTGDINLAEAVKAVGPQRLQDVFPDDGTAIA.

Catalysis depends on Asp8, which acts as the Proton acceptor. Residue Asp129 is the Proton donor of the active site.

It belongs to the HisA/HisF family.

It is found in the cytoplasm. It carries out the reaction 1-(5-phospho-beta-D-ribosyl)-5-[(5-phospho-beta-D-ribosylamino)methylideneamino]imidazole-4-carboxamide = 5-[(5-phospho-1-deoxy-D-ribulos-1-ylimino)methylamino]-1-(5-phospho-beta-D-ribosyl)imidazole-4-carboxamide. It participates in amino-acid biosynthesis; L-histidine biosynthesis; L-histidine from 5-phospho-alpha-D-ribose 1-diphosphate: step 4/9. The sequence is that of 1-(5-phosphoribosyl)-5-[(5-phosphoribosylamino)methylideneamino] imidazole-4-carboxamide isomerase from Picosynechococcus sp. (strain ATCC 27264 / PCC 7002 / PR-6) (Agmenellum quadruplicatum).